Here is a 444-residue protein sequence, read N- to C-terminus: Phosphoglucosamine mutase (444 aa).

The active-site Phosphoserine intermediate is the serine 103. Residues serine 103, aspartate 241, aspartate 243, and aspartate 245 each contribute to the Mg(2+) site. A Phosphoserine modification is found at serine 103.

Belongs to the phosphohexose mutase family. Mg(2+) is required as a cofactor. Activated by phosphorylation.

The enzyme catalyses alpha-D-glucosamine 1-phosphate = D-glucosamine 6-phosphate. Catalyzes the conversion of glucosamine-6-phosphate to glucosamine-1-phosphate. The protein is Phosphoglucosamine mutase of Deinococcus geothermalis (strain DSM 11300 / CIP 105573 / AG-3a).